Reading from the N-terminus, the 171-residue chain is Phosphopantetheine adenylyltransferase (171 aa).

T9 is a binding site for substrate. ATP contacts are provided by residues 9–10 and H17; that span reads TF. K41, L73, and R87 together coordinate substrate. ATP contacts are provided by residues 88–90, E98, and 123–129; these read GLR and YQFISGT.

It belongs to the bacterial CoaD family. In terms of assembly, homohexamer. Mg(2+) is required as a cofactor.

It localises to the cytoplasm. It catalyses the reaction (R)-4'-phosphopantetheine + ATP + H(+) = 3'-dephospho-CoA + diphosphate. The protein operates within cofactor biosynthesis; coenzyme A biosynthesis; CoA from (R)-pantothenate: step 4/5. Reversibly transfers an adenylyl group from ATP to 4'-phosphopantetheine, yielding dephospho-CoA (dPCoA) and pyrophosphate. This chain is Phosphopantetheine adenylyltransferase, found in Paraburkholderia xenovorans (strain LB400).